The chain runs to 371 residues: RNA-binding protein 48 (371 aa).

Residues 46–124 enclose the RRM domain; it reads QYLLIQGVPA…GLLHVCYAPE (79 aa). 2 disordered regions span residues 220–249 and 343–371; these read EHTDKASDSCNSARNRGELQKHRDHSAFPP and EVTSSVPKPPEDNGEDVCTSHPRKQRRRI.

This sequence belongs to the RBM48 family. Component of the minor spliceosome. Within this complex, interacts with ARMC7 and PRPF8/PRP8.

Functionally, as a component of the minor spliceosome, involved in the splicing of U12-type introns in pre-mRNAs. This is RNA-binding protein 48 (Rbm48) from Rattus norvegicus (Rat).